The primary structure comprises 171 residues: 3-hydroxydecanoyl-[acyl-carrier-protein] dehydratase (171 aa).

The active site involves H70.

The protein belongs to the thioester dehydratase family. FabA subfamily. In terms of assembly, homodimer.

It is found in the cytoplasm. The enzyme catalyses a (3R)-hydroxyacyl-[ACP] = a (2E)-enoyl-[ACP] + H2O. The catalysed reaction is (3R)-hydroxydecanoyl-[ACP] = (2E)-decenoyl-[ACP] + H2O. It catalyses the reaction (2E)-decenoyl-[ACP] = (3Z)-decenoyl-[ACP]. The protein operates within lipid metabolism; fatty acid biosynthesis. Functionally, necessary for the introduction of cis unsaturation into fatty acids. Catalyzes the dehydration of (3R)-3-hydroxydecanoyl-ACP to E-(2)-decenoyl-ACP and then its isomerization to Z-(3)-decenoyl-ACP. Can catalyze the dehydratase reaction for beta-hydroxyacyl-ACPs with saturated chain lengths up to 16:0, being most active on intermediate chain length. This chain is 3-hydroxydecanoyl-[acyl-carrier-protein] dehydratase, found in Stutzerimonas stutzeri (strain A1501) (Pseudomonas stutzeri).